A 626-amino-acid polypeptide reads, in one-letter code: Deoxynucleoside triphosphate triphosphohydrolase SAMHD1 (626 aa).

Position 1 is an N-acetylmethionine (M1). Basic and acidic residues predominate over residues 1 to 19 (MQRADSEQPSKRPRCDDSP). A disordered region spans residues 1-36 (MQRADSEQPSKRPRCDDSPRTPSNTPSAEADWSPGL). S18 bears the Phosphoserine mark. Phosphothreonine is present on residues T21 and T25. Phosphoserine is present on residues S33 and S93. The region spanning 45–110 (WGPEQVCSFL…LSYIQRLVQI (66 aa)) is the SAM domain. K116 and V117 together coordinate GTP. N119 provides a ligand contact to dATP. N119 provides a ligand contact to dCTP. N119 contributes to the dGTP binding site. N119 contributes to the dTTP binding site. GTP-binding residues include D137, Q142, and R145. Position 149 (Q149) interacts with dATP. Q149 lines the dCTP pocket. DGTP is bound by residues Q149, L150, V156, and R164. A dTTP-binding site is contributed by Q149. DATP-binding residues include V156 and R164. DCTP is bound by residues V156 and R164. DTTP is bound by residues V156 and R164. Residues 164–316 (RFEHSLGVGY…GIDVDKWDYF (153 aa)) form the HD domain. Mn(2+)-binding residues include H167, H206, and D207. 2 residues coordinate dATP: H210 and H215. DCTP-binding residues include H210 and H215. Residues H210 and H215 each coordinate dTTP. H233 is a catalytic residue. D311 is a Mn(2+) binding site. The dATP site is built by K312, Y315, D319, R333, R352, K354, N358, and R366. Residues K312, Y315, D319, R333, R352, and K354 each contribute to the dCTP site. 8 residues coordinate dGTP: K312, Y315, D319, R333, R352, K354, N358, and R366. K312, Y315, D319, R333, R352, and K354 together coordinate dTTP. DCTP contacts are provided by R366 and R372. DGTP is bound by residues Y374, Q375, H376, and K377. DATP contacts are provided by Q375, H376, and K377. Q375, H376, and K377 together coordinate dCTP. The dTTP site is built by Q375, H376, and K377. Positions 451 and 455 each coordinate GTP. Residues K467, K469, and K492 each participate in a glycyl lysine isopeptide (Lys-Gly) (interchain with G-Cter in SUMO2) cross-link. A GTP-binding site is contributed by K523. Residue K523 coordinates dATP. K523 is a dCTP binding site. K523 contacts dGTP. Residue K523 participates in dTTP binding. T592 is subject to (Microbial infection) Phosphothreonine. T592 is modified (phosphothreonine; by CDK1). K622 participates in a covalent cross-link: Glycyl lysine isopeptide (Lys-Gly) (interchain with G-Cter in SUMO2).

Belongs to the SAMHD1 family. In terms of assembly, homodimer; in absence of GTP and dNTP. Homotetramer; in GTP- and dNTP-bound form. Interacts with MRE11; leading to stimulate the exonuclease activity of MRE11. Interacts with RBBP8/CtIP. Interacts (via its C-terminus) with CD81. (Microbial infection) Interacts with HIV-2 viral protein Vpx; promoting interaction with a E3 ubiquitin-protein ligase complex containing DCAF1, leading to subsequent ubiquitination and degradation of SAMHD1. Mn(2+) is required as a cofactor. In terms of processing, phosphorylation at Thr-592 by CDK1 acts as a switch to control deoxynucleoside triphosphate (dNTPase)-dependent and -independent functions. Phosphorylation at Thr-592 takes place in cycling cells: it reduces the stability of the homotetramer, impairing the dNTPase activity and subsequent ability to restrict infection by viruses. It also inhibits ability to suppress LINE-1 retrotransposon activity. In contrast, phosphorylation at Thr-592 promotes DNA end resection at stalled replication forks in response to DNA damage. Post-translationally, (Microbial infection) Phosphorylation at Thr-592 by Epstein-Barr virus kinase BGLF4 and human cytomegalovirus/HCMV UL97 leads to a reduced level of dCTPase and dTTPase activity and the loss of viral restriction. (Microbial infection) Ubiquitinated following interaction with HIV-2 viral protein Vpx; Vpx promotes interaction and with a DCX (DDB1-CUL4-X-box) E3 ubiquitin ligase, leading to proteasomal degradation. As to expression, expressed in heart, skeletal muscle, spleen, liver, small intestine, placenta, lung and peripheral blood leukocytes. No expression is seen in brain and thymus.

The protein localises to the nucleus. It is found in the chromosome. The enzyme catalyses a 2'-deoxyribonucleoside 5'-triphosphate + H2O = a 2'-deoxyribonucleoside + triphosphate + H(+). It catalyses the reaction dATP + H2O = 2'-deoxyadenosine + triphosphate + H(+). The catalysed reaction is dCTP + H2O = 2'-deoxycytidine + triphosphate + H(+). It carries out the reaction dGTP + H2O = 2'-deoxyguanosine + triphosphate + H(+). The enzyme catalyses dTTP + H2O = thymidine + triphosphate + H(+). Its activity is regulated as follows. Allosterically activated and regulated via the combined actions of GTP and dNTPs (dATP, dGTP, dTTP and dCTP): Allosteric site 1 binds GTP, while allosteric site 2 binds dNTP. Allosteric activation promotes the formation of highly active homotetramers. Phosphorylation at Thr-592 impairs homotetramerization, thereby inhibiting dNTPase activity, leading to reduced ability to restrict infection by viruses. Protein that acts both as a host restriction factor involved in defense response to virus and as a regulator of DNA end resection at stalled replication forks. Has deoxynucleoside triphosphate (dNTPase) activity, which is required to restrict infection by viruses, such as HIV-1: dNTPase activity reduces cellular dNTP levels to levels too low for retroviral reverse transcription to occur, blocking early-stage virus replication in dendritic and other myeloid cells. Likewise, suppresses LINE-1 retrotransposon activity. Not able to restrict infection by HIV-2 virus; because restriction activity is counteracted by HIV-2 viral protein Vpx. In addition to virus restriction, dNTPase activity acts as a regulator of DNA precursor pools by regulating dNTP pools. Phosphorylation at Thr-592 acts as a switch to control dNTPase-dependent and -independent functions: it inhibits dNTPase activity and ability to restrict infection by viruses, while it promotes DNA end resection at stalled replication forks. Functions during S phase at stalled DNA replication forks to promote the resection of gapped or reversed forks: acts by stimulating the exonuclease activity of MRE11, activating the ATR-CHK1 pathway and allowing the forks to restart replication. Its ability to promote degradation of nascent DNA at stalled replication forks is required to prevent induction of type I interferons, thereby preventing chronic inflammation. Ability to promote DNA end resection at stalled replication forks is independent of dNTPase activity. Enhances immunoglobulin hypermutation in B-lymphocytes by promoting transversion mutation. The chain is Deoxynucleoside triphosphate triphosphohydrolase SAMHD1 from Homo sapiens (Human).